We begin with the raw amino-acid sequence, 453 residues long: GTPase Der (453 aa).

EngA-type G domains lie at 3 to 167 (PIIV…ISEK) and 187 to 360 (IKVA…EDSK). Residues 9 to 16 (GRTNVGKS), 57 to 61 (DTAGL), 119 to 122 (NKID), 193 to 200 (GRPNVGKS), 240 to 244 (DTAGA), and 305 to 308 (NKCD) each bind GTP. The KH-like domain maps to 361 to 445 (RKISTSTLIK…PIQIQFKDNE (85 aa)).

Belongs to the TRAFAC class TrmE-Era-EngA-EngB-Septin-like GTPase superfamily. EngA (Der) GTPase family. As to quaternary structure, associates with the 50S ribosomal subunit.

Its function is as follows. GTPase that plays an essential role in the late steps of ribosome biogenesis. This Buchnera aphidicola subsp. Acyrthosiphon pisum (strain 5A) protein is GTPase Der.